A 322-amino-acid polypeptide reads, in one-letter code: uncharacterized protein (322 aa).

Positions 1-32 (MRDGIGKRAASALFLCGVLVMLAVSSAIVSSA) are cleaved as a signal peptide.

This is an uncharacterized protein from Bacillus subtilis (strain 168).